The sequence spans 107 residues: Iron-binding protein IscA (107 aa).

The Fe cation site is built by Cys35, Cys99, and Cys101.

The protein belongs to the HesB/IscA family. In terms of assembly, homodimer; may form tetramers and higher multimers. Requires Fe cation as cofactor.

Its function is as follows. Is able to transfer iron-sulfur clusters to apo-ferredoxin. Multiple cycles of [2Fe2S] cluster formation and transfer are observed, suggesting that IscA acts catalytically. Recruits intracellular free iron so as to provide iron for the assembly of transient iron-sulfur cluster in IscU in the presence of IscS, L-cysteine and the thioredoxin reductase system TrxA/TrxB. In Xenorhabdus nematophila (strain ATCC 19061 / DSM 3370 / CCUG 14189 / LMG 1036 / NCIMB 9965 / AN6), this protein is Iron-binding protein IscA.